Reading from the N-terminus, the 628-residue chain is MGCKMKQTAFEKSIDPASQKMLEKAENEGIETAWDRYEKQLPQCSFGQLGICCRNCNMGPCRIDPFGEGAEKGICGATADIIVARNLLRMIAAGAAAHSDHARDAVLTFKKMTEGEAGSYGIKDKTKLFSLASEYGISLEGKSHEEVAGELASALLAEFGKQEGPIQYTRRAPEARLRLWTSLGIEPRGVDREIVECMHRTHIGVDNDATHILLHGLRTSLSDGWGGSMIATEIQDVLFGTPEPKKSTVNLGVLSHDKVNVIIHGHEPILSEMIVQAAEDPELLELAKEKGAAGINVAGICCTGNETLMRHGTPIAGNFLQQELAVVTGAVEAMIVDVQCIMPALGNLTGCYHTKFISTSPKADFPGTVRMEFHEERAYDTAREIVRTAVENFPNRNIEKVNIPEEKQECMVGFSAEAILKALGGSPAPLIDAIAGGAVKGIGAVVGCNNVKVQHNYGHVNLVKELIKNNVLVVTTGCNAIACAEAGLLVPEAAAQAGDGLKGVCEALGIPPVLHMGSCVDISRILVLASAIAKSLGVDISDLPAAGAAPEWMSEKAVSIGAYVVSSGVFTVLGTVPPVLGSQAVTALLTKGLDNVIGASFAVEPDPFKAANLMLEHIEGKRKALGLN.

Positions 44, 52, 53, 56, 61, and 75 each coordinate [4Fe-4S] cluster. Residues His266, Cys302, Cys340, Cys448, Cys478, and Cys519 each coordinate [Ni-4Fe-5S] cluster.

This sequence belongs to the Ni-containing carbon monoxide dehydrogenase family. In terms of assembly, homodimer. The cofactor is [4Fe-4S] cluster. [Ni-4Fe-5S] cluster serves as cofactor.

The enzyme catalyses CO + 2 oxidized [2Fe-2S]-[ferredoxin] + H2O = 2 reduced [2Fe-2S]-[ferredoxin] + CO2 + 2 H(+). Functionally, CODH oxidizes carbon monoxide coupled, via CooF, to the reduction of a hydrogen cation by a hydrogenase (possibly CooH). The polypeptide is Carbon monoxide dehydrogenase 1 (cooS1) (Methanosarcina mazei (strain ATCC BAA-159 / DSM 3647 / Goe1 / Go1 / JCM 11833 / OCM 88) (Methanosarcina frisia)).